The chain runs to 200 residues: Probable GTP-binding protein EngB (200 aa).

In terms of domain architecture, EngB-type G spans 22-197; that stretch reads NLPEYAFIGR…LDYIDSINRS (176 aa). Residues 30-37, 57-61, 75-78, 142-145, and 173-178 contribute to the GTP site; these read GRSNVGKS, GKTLL, DLPG, TKAD, and HFVSSS. Mg(2+) is bound by residues S37 and T59.

This sequence belongs to the TRAFAC class TrmE-Era-EngA-EngB-Septin-like GTPase superfamily. EngB GTPase family. It depends on Mg(2+) as a cofactor.

Necessary for normal cell division and for the maintenance of normal septation. This Phocaeicola vulgatus (strain ATCC 8482 / DSM 1447 / JCM 5826 / CCUG 4940 / NBRC 14291 / NCTC 11154) (Bacteroides vulgatus) protein is Probable GTP-binding protein EngB.